The sequence spans 68 residues: Conotoxin Cal14.13a (68 aa).

A signal peptide spans 1 to 21; it reads MKLCVVIVLLMLAMPFNGGEA. The propeptide occupies 22 to 38; the sequence is SRFFNQHARSQRSGMKT. V66 is subject to Valine amide.

Post-translationally, contains 2 disulfide bonds. As to expression, expressed by the venom duct.

It is found in the secreted. Its function is as follows. Probable neurotoxin with unknown target. Possibly targets ion channels. The chain is Conotoxin Cal14.13a from Californiconus californicus (California cone).